A 492-amino-acid polypeptide reads, in one-letter code: Glycogen synthase 1 (492 aa).

Lysine 15 lines the ADP-alpha-D-glucose pocket.

The protein belongs to the glycosyltransferase 1 family. Bacterial/plant glycogen synthase subfamily.

It catalyses the reaction [(1-&gt;4)-alpha-D-glucosyl](n) + ADP-alpha-D-glucose = [(1-&gt;4)-alpha-D-glucosyl](n+1) + ADP + H(+). Its pathway is glycan biosynthesis; glycogen biosynthesis. In terms of biological role, synthesizes alpha-1,4-glucan chains using ADP-glucose. The polypeptide is Glycogen synthase 1 (Trichormus variabilis (strain ATCC 29413 / PCC 7937) (Anabaena variabilis)).